The following is a 347-amino-acid chain: Heat-inducible transcription repressor HrcA (347 aa).

This sequence belongs to the HrcA family.

Negative regulator of class I heat shock genes (grpE-dnaK-dnaJ and groELS operons). Prevents heat-shock induction of these operons. The protein is Heat-inducible transcription repressor HrcA of Lactococcus lactis subsp. cremoris (strain MG1363).